A 61-amino-acid polypeptide reads, in one-letter code: Small ribosomal subunit protein uS14 (61 aa).

Zn(2+) contacts are provided by Cys24, Cys27, Cys40, and Cys43.

It belongs to the universal ribosomal protein uS14 family. Zinc-binding uS14 subfamily. Part of the 30S ribosomal subunit. Contacts proteins S3 and S10. The cofactor is Zn(2+).

Binds 16S rRNA, required for the assembly of 30S particles and may also be responsible for determining the conformation of the 16S rRNA at the A site. The protein is Small ribosomal subunit protein uS14 of Roseiflexus sp. (strain RS-1).